Here is a 350-residue protein sequence, read N- to C-terminus: Chorismate synthase (350 aa).

Residues R39 and R45 each contribute to the NADP(+) site. FMN is bound by residues 119-121 (RSS), 213-214 (QA), G258, 273-277 (KPIPT), and R299.

It belongs to the chorismate synthase family. Homotetramer. The cofactor is FMNH2.

It carries out the reaction 5-O-(1-carboxyvinyl)-3-phosphoshikimate = chorismate + phosphate. It participates in metabolic intermediate biosynthesis; chorismate biosynthesis; chorismate from D-erythrose 4-phosphate and phosphoenolpyruvate: step 7/7. Its function is as follows. Catalyzes the anti-1,4-elimination of the C-3 phosphate and the C-6 proR hydrogen from 5-enolpyruvylshikimate-3-phosphate (EPSP) to yield chorismate, which is the branch point compound that serves as the starting substrate for the three terminal pathways of aromatic amino acid biosynthesis. This reaction introduces a second double bond into the aromatic ring system. The sequence is that of Chorismate synthase from Thermoanaerobacter pseudethanolicus (strain ATCC 33223 / 39E) (Clostridium thermohydrosulfuricum).